The sequence spans 368 residues: DNA replication and repair protein RecF (368 aa).

Residue 30-37 (GRNGSGKT) coordinates ATP.

The protein belongs to the RecF family.

Its subcellular location is the cytoplasm. Functionally, the RecF protein is involved in DNA metabolism; it is required for DNA replication and normal SOS inducibility. RecF binds preferentially to single-stranded, linear DNA. It also seems to bind ATP. In Chlorobaculum tepidum (strain ATCC 49652 / DSM 12025 / NBRC 103806 / TLS) (Chlorobium tepidum), this protein is DNA replication and repair protein RecF.